A 975-amino-acid polypeptide reads, in one-letter code: Lateral signaling target protein 2 homolog (975 aa).

2 disordered regions span residues 299 to 458 (PLGS…GTDE) and 504 to 523 (YGTA…PSTS). Composition is skewed to low complexity over residues 302–352 (SSSI…TTNT), 365–376 (NNHNSNSNSSSN), 383–400 (TLRS…TPTA), and 408–429 (PSHS…PADW). Residues 430–458 (SDGDDEDEDDDDIDVDEEDPESSDDGTDE) are compositionally biased toward acidic residues. Ser540 and Ser541 each carry phosphoserine. Disordered stretches follow at residues 556–633 (EEHM…SSLS) and 740–891 (DNVF…SPPA). Residues 564-602 (GRHHRHHQSHHHHHHHRHSHQHQHRQPHPHRTTRSGRKR) are compositionally biased toward basic residues. Positions 621–633 (LASGDTSAASSLS) are enriched in low complexity. Residues 751-770 (ATGQRHSAGASMQRNNTIDL) are compositionally biased toward polar residues. The residue at position 796 (Ser796) is a Phosphoserine. 2 stretches are compositionally biased toward low complexity: residues 802 to 860 (AASS…PVSA) and 877 to 890 (PSSA…LSPP). The segment at 895-955 (DGKAPRCMAC…VCRDCYVREV (61 aa)) adopts an FYVE-type zinc-finger fold. 8 residues coordinate Zn(2+): Cys901, Cys904, Cys917, Cys920, Cys925, Cys928, Cys947, and Cys950.

This sequence belongs to the lst-2 family.

Negative regulator of epidermal growth factor receptor (EGFR) signaling. This Drosophila sechellia (Fruit fly) protein is Lateral signaling target protein 2 homolog.